Consider the following 169-residue polypeptide: Putative tRNA (cytidine(34)-2'-O)-methyltransferase (169 aa).

Residues I79, G104, I125, and S133 each contribute to the S-adenosyl-L-methionine site.

Belongs to the class IV-like SAM-binding methyltransferase superfamily. RNA methyltransferase TrmH family. TrmL subfamily.

It is found in the cytoplasm. The catalysed reaction is cytidine(34) in tRNA + S-adenosyl-L-methionine = 2'-O-methylcytidine(34) in tRNA + S-adenosyl-L-homocysteine + H(+). The enzyme catalyses 5-carboxymethylaminomethyluridine(34) in tRNA(Leu) + S-adenosyl-L-methionine = 5-carboxymethylaminomethyl-2'-O-methyluridine(34) in tRNA(Leu) + S-adenosyl-L-homocysteine + H(+). Functionally, could methylate the ribose at the nucleotide 34 wobble position in tRNA. The sequence is that of Putative tRNA (cytidine(34)-2'-O)-methyltransferase from Listeria monocytogenes serotype 4b (strain F2365).